Consider the following 319-residue polypeptide: MSLNFLEFEKPIAELEAKIEALRDVSRHGGDSAIDLDKEIEQLEKKSLELKKKIFSDLGAWETAQLARHPQRPYTLDYVKHVFEEFDELAGDRAYADDKAIVAGIARLEGRPVMIIGHQKGRETREKVKRNFGMPKPEGYRKALRLMKMAERFQMPIITFIDTAGAYPGVGAEERGQSEAIATNLKEMAGLTVPVICNVVGEGGSGGALAIGVGDYVNMLQYSTYSVISPEGCASILWRDSDKAPQAAEAMGLVASRLKELELIDEIIEEPLGGAHRNHVQMAANMKATLLRQLAELEQFPQDVLLERRYQRLMNYGYC.

Positions 35–296 constitute a CoA carboxyltransferase C-terminal domain; sequence DLDKEIEQLE…KATLLRQLAE (262 aa).

This sequence belongs to the AccA family. Acetyl-CoA carboxylase is a heterohexamer composed of biotin carboxyl carrier protein (AccB), biotin carboxylase (AccC) and two subunits each of ACCase subunit alpha (AccA) and ACCase subunit beta (AccD).

The protein localises to the cytoplasm. It catalyses the reaction N(6)-carboxybiotinyl-L-lysyl-[protein] + acetyl-CoA = N(6)-biotinyl-L-lysyl-[protein] + malonyl-CoA. It functions in the pathway lipid metabolism; malonyl-CoA biosynthesis; malonyl-CoA from acetyl-CoA: step 1/1. Component of the acetyl coenzyme A carboxylase (ACC) complex. First, biotin carboxylase catalyzes the carboxylation of biotin on its carrier protein (BCCP) and then the CO(2) group is transferred by the carboxyltransferase to acetyl-CoA to form malonyl-CoA. This is Acetyl-coenzyme A carboxylase carboxyl transferase subunit alpha from Vibrio vulnificus (strain CMCP6).